The following is a 91-amino-acid chain: UPF0213 protein NMA2126 (91 aa).

In terms of domain architecture, GIY-YIG spans 4 to 83; that stretch reads SNWSLYLILC…AAQKRKLWEQ (80 aa).

Belongs to the UPF0213 family.

The protein is UPF0213 protein NMA2126 of Neisseria meningitidis serogroup A / serotype 4A (strain DSM 15465 / Z2491).